The chain runs to 92 residues: Small ribosomal subunit protein uS15 (92 aa).

It belongs to the universal ribosomal protein uS15 family. In terms of assembly, part of the 30S ribosomal subunit. Forms a bridge to the 50S subunit in the 70S ribosome, contacting the 23S rRNA.

In terms of biological role, one of the primary rRNA binding proteins, it binds directly to 16S rRNA where it helps nucleate assembly of the platform of the 30S subunit by binding and bridging several RNA helices of the 16S rRNA. Its function is as follows. Forms an intersubunit bridge (bridge B4) with the 23S rRNA of the 50S subunit in the ribosome. The polypeptide is Small ribosomal subunit protein uS15 (Symbiobacterium thermophilum (strain DSM 24528 / JCM 14929 / IAM 14863 / T)).